Here is a 258-residue protein sequence, read N- to C-terminus: MAASDDSSHYFTEFTLSEIVDMENLYKELGDQSLHKDFCQTVASTFSCSVNRNGKSSITWKQVQIWFQEKLKHQSQPKSKTLPSPPLQIHDLSNPSSYASNASNATFVGNSTFVQTRKGKASDLADLAFEAKSARDYAWYDVSSFLTYRVLRTGELEVRVRFSGFDNRHDEWVNVKTSVRERSIPVEPSECGRVNVGDLLLCFQEREDQALYCDGHVLNIKRGIHDHARCNCVFLVRYELDNTEESLGLERICRRPEE.

The segment at 138-244 (AWYDVSSFLT…LVRYELDNTE (107 aa)) is SAWADEE domain. Residues cysteine 191, histidine 225, cysteine 230, and cysteine 232 each contribute to the Zn(2+) site.

In terms of assembly, associates with the RNA polymerase IV (Pol IV) complex. Interacts with NRPD1, NRPD2, NRPD3, NRPD3B, CLSY1 and CLSY2.

Its subcellular location is the nucleus. Involved in RNA-directed DNA methylation (RdDM). Required for the silencing of some endogenous RdDM targets and accumulation of 24-nt siRNAs, but not for the production of Pol V-dependent transcripts. Functions in transcriptional silencing through both DNA methylation-dependent and -independent pathways. Required for both maintenance and de-novo DNA methylation. Plays a role in the recruitment of Pol IV to genomic regions associated with K9 methylated histone H3 that are targets for RdDM. The sequence is that of Protein SAWADEE HOMEODOMAIN HOMOLOG 1 (SHH1) from Arabidopsis thaliana (Mouse-ear cress).